The following is a 384-amino-acid chain: Protein V (384 aa).

Disordered regions lie at residues 1–23 (MDQD…GGRE) and 38–317 (SEPT…TKKG). The span at 7–20 (ILKEDSEVEREAPG) shows a compositional bias: basic and acidic residues. Residues 50 to 59 (LHNTINTPQG) show a composition bias toward polar residues. Ser68 carries the phosphoserine; by host modification. The segment covering 83–101 (RSGEESRVSGRTSKPEAEA) has biased composition (basic and acidic residues). Residue Ser125 is modified to Phosphoserine; by host. Over residues 150–168 (GIEDENREMAAHPDKRGED) the composition is skewed to basic and acidic residues. Positions 191–206 (ASNNGRSMEPGSSHSA) are enriched in polar residues. 4 positions are modified to phosphoserine; by host: Ser192, Ser249, Ser257, and Ser260. 8 residues coordinate Zn(2+): His318, Cys337, Cys341, Cys353, Cys355, Cys358, Cys362, and Cys365.

It belongs to the paramyxoviruses V protein family. In terms of assembly, interacts with host IFIH1/MDA5 and DHX58/LGP2. Interacts with host IRF3. Interacts with host RIGI regulatory protein (via CARDs domain) and host TRIM25 (via SPRY domain); these interactions prevent TRIM25-mediated ubiquitination of RIG-I and disrupts downstream RIG-I signaling.

It localises to the host cytoplasm. In terms of biological role, plays an essential role in the inhibition of host immune response. Prevents the establishment of cellular antiviral state by blocking interferon-alpha/beta (IFN-alpha/beta) production and signaling pathway. Interacts with host IFIH1/MDA5 and DHX58/LGP2 to inhibit the transduction pathway involved in the activation of IFN-beta promoter, thus protecting the virus against cell antiviral state. Also interacts with and inhibits host IRF3. Blocks the type I interferon signaling pathway by disrupting the RIG-I signaling pathway. The sequence is that of Protein V (P/V/C) from Sendai virus (strain Fushimi) (SeV).